The primary structure comprises 153 residues: Interleukin-2 (153 aa).

An N-terminal signal peptide occupies residues 1–20 (MYRMQLLSCIALSLALVTNS). O-linked (GalNAc...) threonine glycosylation occurs at Thr23. An intrachain disulfide couples Cys78 to Cys125.

The protein belongs to the IL-2 family.

The protein resides in the secreted. Cytokine produced by activated CD4-positive helper T-cells and to a lesser extend activated CD8-positive T-cells and natural killer (NK) cells that plays pivotal roles in the immune response and tolerance. Binds to a receptor complex composed of either the high-affinity trimeric IL-2R (IL2RA/CD25, IL2RB/CD122 and IL2RG/CD132) or the low-affinity dimeric IL-2R (IL2RB and IL2RG). Interaction with the receptor leads to oligomerization and conformation changes in the IL-2R subunits resulting in downstream signaling starting with phosphorylation of JAK1 and JAK3. In turn, JAK1 and JAK3 phosphorylate the receptor to form a docking site leading to the phosphorylation of several substrates including STAT5. This process leads to activation of several pathways including STAT, phosphoinositide-3-kinase/PI3K and mitogen-activated protein kinase/MAPK pathways. Functions as a T-cell growth factor and can increase NK-cell cytolytic activity as well. Promotes strong proliferation of activated B-cells and subsequently immunoglobulin production. Plays a pivotal role in regulating the adaptive immune system by controlling the survival and proliferation of regulatory T-cells, which are required for the maintenance of immune tolerance. Moreover, participates in the differentiation and homeostasis of effector T-cell subsets, including Th1, Th2, Th17 as well as memory CD8-positive T-cells. The chain is Interleukin-2 (IL2) from Homo sapiens (Human).